A 650-amino-acid polypeptide reads, in one-letter code: Threonine--tRNA ligase (650 aa).

The TGS domain maps to 1–66 (MVQITLPDGS…EHDAQLAIVT (66 aa)). The tract at residues 247–538 (DHRKIGRDLD…LIENHAGAMP (292 aa)) is catalytic. Residues Cys338, His389, and His515 each contribute to the Zn(2+) site.

Belongs to the class-II aminoacyl-tRNA synthetase family. Homodimer. The cofactor is Zn(2+).

It localises to the cytoplasm. It carries out the reaction tRNA(Thr) + L-threonine + ATP = L-threonyl-tRNA(Thr) + AMP + diphosphate + H(+). Functionally, catalyzes the attachment of threonine to tRNA(Thr) in a two-step reaction: L-threonine is first activated by ATP to form Thr-AMP and then transferred to the acceptor end of tRNA(Thr). Also edits incorrectly charged L-seryl-tRNA(Thr). This Bordetella petrii (strain ATCC BAA-461 / DSM 12804 / CCUG 43448) protein is Threonine--tRNA ligase.